Reading from the N-terminus, the 1601-residue chain is MNSPVDPGARQALRKKPPERTPEDLNTIYSYLHGMEILSNLREHQLRLMSARARYERYSGNQVLFCSETIARCWYILLSGSVLVKGSMVLPPCSFGKQFGGKRGCDCLVLEPSEMIVVENAKDNEDSILQREIPARQSRRRFRKINYKGERQTITDDVEVNSYLSLPADLTKMHLTENPHPQVTHVSSSQSGCSIASDSGSSSLSDIYQATESEVGDVDLTRLPEGPVDSEDDEEEDEEIDRTDPLQGRDLVRECLEKEPADKTDDDIEQLLEFMHQLPAFANMTMSVRRELCSVMIFEVVEQAGAIILEDGQELDSWYVILNGTVEISHPDGKVENLFMGNSFGITPTLDKQYMHGIVRTKVDDCQFVCIAQQDYWRILNHVEKNTHKVEEEGEIVMVHEHRELDRSGTRKGHIVIKATPERLIMHLIEEHSIVDPTYIEDFLLTYRTFLESPLDVGIKLLEWFKIDSLRDKVTRIVLLWVNNHFNDFEGDPAMTRFLEEFEKNLEDTKMNGHLRLLNIACAAKAKWRQVVLQKASRESPLQFSLNGGSEKGFGIFVEGVEPGSKAADSGLKRGDQIMEVNGQNFENITFMKAVEILRNNTHLALTVKTNIFVFKELLFRTEQEKSGVPHIPKIAEKKSNRHSIQHVPGDIEQTSQEKGSKKVKANTVSGGRNKIRKILDKTRFSILPPKLFSDGGLSQSQDDSIVGTRHCRHSLAIMPIPGTLSSSSPDLLQPTTSMLDFSNPSDIPDQVIRVFKVDQQSCYIIISKDTTAKEVVFHAVHEFGLTGASDTYSLCEVSVTPEGVIKQRRLPDQFSKLADRIQLNGRYYLKNNMETETLCSDEDAQELVKESQLSMLQLSTIEVATQLSMRDFDLFRNIEPTEYIDDLFKLNSKTGNTHLKRFEDIVNQETFWVASEILTEANQLKRMKIIKHFIKIALHCRECKNFNSMFAIISGLNLASVARLRGTWEKLPSKYEKHLQDLQDIFDPSRNMAKYRNILSSQSMQPPIIPLFPVVKKDMTFLHEGNDSKVDGLVNFEKLRMISKEIRQVVRMTSANMDPAMMFRQRSLSQGSTNSNMLDVQGGAHKKRARRSSLLNAKKLYEDAQMARKVKQYLSSLDVETDEEKFQMMSLQWEPAYGTLTKNLSEKRSAKSSEMSPVPMRSAGQTTKAHLHQPHRVSQVLQVPAVNLHPIRKKGQTKDPALNTSLPQKVLGTTEEISGKKHTEDTISVASSLHSSPPASPQGSPHKGYTLIPSAKSDNLSDSSHSEISSRSSIVSNCSVDSMSAALQDERCSSQALAVPESTGALEKTEHASGIGDHSQHGPGWTLLKPSLIKCLAVSSSVSNEEISQEHIIIEAADSGRGSWTSCSSSSHDNFQSLPNPKSWDFLNSYRHTHLDDPIAEVEPTDSEPYSCSKSCSRTCGQCKGSLERKSWTSSSSLSDTYEPNYGTVKQRVLESTPAESSEGLDPKDATDPVYKTVTSSTEKGLIVYCVTSPKKDDRYREPPPTPPGYLGISLADLKEGPHTHLKPPDYSVAVQRSKMMHNSLSRLPPASLSSNLVACVPSKIVTQPQRHNLQPFHPKLGDVTDADSEADENEQVSAV.

N-acetylmethionine is present on Met1. 2 disordered regions span residues 1–22 (MNSP…ERTP) and 179–250 (PHPQ…QGRD). Ser3 bears the Phosphoserine mark. Low complexity predominate over residues 187-205 (SSSQSGCSIASDSGSSSLS). Acidic residues predominate over residues 228–241 (VDSEDDEEEDEEID). 280–399 (AFANMTMSVR…VEEEGEIVMV (120 aa)) lines the a nucleoside 3',5'-cyclic phosphate pocket. One can recognise an N-terminal Ras-GEF domain in the interval 412-526 (KGHIVIKATP…LLNIACAAKA (115 aa)). The PDZ domain maps to 530-615 (QVVLQKASRE…LTVKTNIFVF (86 aa)). The Ras-associating domain occupies 749-835 (PDQVIRVFKV…GRYYLKNNME (87 aa)). A Ras-GEF domain is found at 860 to 1088 (STIEVATQLS…LDVQGGAHKK (229 aa)). Disordered stretches follow at residues 1192-1274 (IRKK…SRSS), 1302-1324 (ESTG…QHGP), 1455-1478 (LEST…VYKT), and 1571-1601 (QRHN…VSAV). 2 stretches are compositionally biased toward low complexity: residues 1229–1238 (SVASSLHSSP) and 1255–1274 (SAKS…SRSS). Acidic residues predominate over residues 1586 to 1601 (TDADSEADENEQVSAV).

Interacts with the second PDZ domain of human PTP1e. In terms of tissue distribution, isoform 3 has highest expression levels in the brain, heart, liver, lung and placenta and is barely detectable in skeletal muscle, kidney and pancreas.

The protein localises to the cytoplasm. The protein resides in the cell membrane. Guanine nucleotide exchange factor (GEF) for Rap1A, Rap2A and M-Ras GTPases. Does not interact with cAMP. This is Rap guanine nucleotide exchange factor 6 (RAPGEF6) from Homo sapiens (Human).